Consider the following 644-residue polypeptide: SPbeta prophage-derived uncharacterized protein YomE (644 aa).

This is SPbeta prophage-derived uncharacterized protein YomE (yomE) from Bacillus subtilis (strain 168).